The chain runs to 206 residues: Small ribosomal subunit protein uS4 (206 aa).

Positions 98-155 (TRLDNVVYRLGWALSRDQARQLVSHGKIAVNGKRVNIPSYNLKPGDVVELLDKDLIPV) constitute an S4 RNA-binding domain.

Belongs to the universal ribosomal protein uS4 family. As to quaternary structure, part of the 30S ribosomal subunit. Contacts protein S5. The interaction surface between S4 and S5 is involved in control of translational fidelity.

Functionally, one of the primary rRNA binding proteins, it binds directly to 16S rRNA where it nucleates assembly of the body of the 30S subunit. Its function is as follows. With S5 and S12 plays an important role in translational accuracy. This Dictyoglomus thermophilum (strain ATCC 35947 / DSM 3960 / H-6-12) protein is Small ribosomal subunit protein uS4.